The chain runs to 1121 residues: PR domain zinc finger protein 10 (1121 aa).

Disordered stretches follow at residues 1 to 24 (MEAK…NTPQ) and 92 to 125 (TEAS…MDDW). Residues 106–124 (VDSEDEEEDNDSEDSEMDD) show a composition bias toward acidic residues. The 118-residue stretch at 173–290 (LPLVLYIDRF…PKQELKVWYA (118 aa)) folds into the SET domain. Residues 192–295 (IPKRTQFGPL…KVWYAASYAE (104 aa)) are N-terminal PR domain; essential for transcriptional activation. The C2H2-type 1 zinc finger occupies 319-341 (WPCYECNRRFMSSEQLQQHLNMH). Disordered regions lie at residues 350 to 387 (RPKS…SADK) and 419 to 473 (ESME…PHLT). The segment covering 351-374 (PKSRGRGRGRKRFGGARRPGRRTK) has biased composition (basic residues). 9 C2H2-type zinc fingers span residues 500–522 (FKCP…MRFH), 529–551 (HVCH…LVLH), 557–579 (YSCL…VGIH), 585–608 (FLCP…RSFH), 613–635 (FQCS…MLRH), 641–664 (FLCS…QRMH), 696–719 (FKCR…SKRH), 741–764 (YYCQ…LKNH), and 803–826 (VCCP…RKKH). Positions 871 to 1101 (QAMTELSQTL…PAGGQQATTQ (231 aa)) are C-terminal glutamine-rich region; essential for transcriptional activation. The tract at residues 1077-1097 (VPSTATQGHPDPLEQPAGGQQ) is disordered.

The protein belongs to the class V-like SAM-binding methyltransferase superfamily.

It localises to the nucleus. Its function is as follows. Transcriptional activator, essential for early embryonic development and survival of embryonic stem cells (ESCs). Supports cell growth and survival during early development by transcriptionally activating the expression of the translation initiation factor EIF3B, to sustain global translation. Activates the transcription of FLNC. In Danio rerio (Zebrafish), this protein is PR domain zinc finger protein 10 (prdm10).